A 108-amino-acid polypeptide reads, in one-letter code: Urease subunit beta (108 aa).

This sequence belongs to the urease beta subunit family. Heterotrimer of UreA (gamma), UreB (beta) and UreC (alpha) subunits. Three heterotrimers associate to form the active enzyme.

Its subcellular location is the cytoplasm. The catalysed reaction is urea + 2 H2O + H(+) = hydrogencarbonate + 2 NH4(+). It functions in the pathway nitrogen metabolism; urea degradation; CO(2) and NH(3) from urea (urease route): step 1/1. This is Urease subunit beta from Proteus hauseri.